The sequence spans 134 residues: Interleukin-4 (134 aa).

The first 23 residues, 1 to 23, serve as a signal peptide directing secretion; it reads MGLTYQLLPALVCLLACTSFIQG. 2 disulfide bridges follow: cysteine 24-cysteine 133 and cysteine 48-cysteine 88. Residue asparagine 38 is glycosylated (N-linked (GlcNAc...) asparagine). Asparagine 101 is a glycosylation site (N-linked (GlcNAc...) asparagine).

It belongs to the IL-4/IL-13 family.

The protein resides in the secreted. In terms of biological role, participates in at least several B-cell activation processes as well as of other cell types. It is a costimulator of DNA-synthesis. It induces the expression of class II MHC molecules on resting B-cells. It enhances both secretion and cell surface expression of IgE and IgG1. It also regulates the expression of the low affinity Fc receptor for IgE (CD23) on both lymphocytes and monocytes. Positively regulates IL31RA expression in macrophages. Stimulates autophagy in dendritic cells by interfering with mTORC1 signaling and through the induction of RUFY4. The polypeptide is Interleukin-4 (IL4) (Equus caballus (Horse)).